We begin with the raw amino-acid sequence, 460 residues long: Cysteine--tRNA ligase (460 aa).

C28 contacts Zn(2+). The 'HIGH' region motif lies at 30–40 (MTVYDYCHLGH). Zn(2+)-binding residues include C209, H234, and E238. The 'KMSKS' region signature appears at 266–270 (KMSKS). K269 contacts ATP.

This sequence belongs to the class-I aminoacyl-tRNA synthetase family. As to quaternary structure, monomer. Zn(2+) serves as cofactor.

The protein resides in the cytoplasm. It carries out the reaction tRNA(Cys) + L-cysteine + ATP = L-cysteinyl-tRNA(Cys) + AMP + diphosphate. This chain is Cysteine--tRNA ligase, found in Pseudomonas paraeruginosa (strain DSM 24068 / PA7) (Pseudomonas aeruginosa (strain PA7)).